We begin with the raw amino-acid sequence, 447 residues long: uncharacterized protein (447 aa).

The protein resides in the mitochondrion. This is an uncharacterized protein from Dictyostelium discoideum (Social amoeba).